Consider the following 468-residue polypeptide: Glutamate--tRNA ligase 2 (468 aa).

The short motif at proline 11–glycine 21 is the 'HIGH' region element. The 'KMSKS' region motif lies at lysine 239 to arginine 243. Residue lysine 242 coordinates ATP.

It belongs to the class-I aminoacyl-tRNA synthetase family. Glutamate--tRNA ligase type 1 subfamily. Monomer.

It is found in the cytoplasm. It carries out the reaction tRNA(Glu) + L-glutamate + ATP = L-glutamyl-tRNA(Glu) + AMP + diphosphate. Functionally, catalyzes the attachment of glutamate to tRNA(Glu) in a two-step reaction: glutamate is first activated by ATP to form Glu-AMP and then transferred to the acceptor end of tRNA(Glu). This is Glutamate--tRNA ligase 2 from Ruegeria pomeroyi (strain ATCC 700808 / DSM 15171 / DSS-3) (Silicibacter pomeroyi).